Reading from the N-terminus, the 1098-residue chain is Ran-binding protein 16 (1098 aa).

Belongs to the exportin family. In terms of assembly, binds to nucleoporins and the GTP-bound form of Ran.

The protein resides in the cytoplasm. It localises to the nucleus. In terms of biological role, may function as a nuclear transport receptor. This Drosophila melanogaster (Fruit fly) protein is Ran-binding protein 16 (Ranbp16).